Consider the following 145-residue polypeptide: D-aminoacyl-tRNA deacylase (145 aa).

The short motif at 137 to 138 is the Gly-cisPro motif, important for rejection of L-amino acids element; the sequence is GP.

This sequence belongs to the DTD family. Homodimer.

Its subcellular location is the cytoplasm. The catalysed reaction is glycyl-tRNA(Ala) + H2O = tRNA(Ala) + glycine + H(+). The enzyme catalyses a D-aminoacyl-tRNA + H2O = a tRNA + a D-alpha-amino acid + H(+). Its function is as follows. An aminoacyl-tRNA editing enzyme that deacylates mischarged D-aminoacyl-tRNAs. Also deacylates mischarged glycyl-tRNA(Ala), protecting cells against glycine mischarging by AlaRS. Acts via tRNA-based rather than protein-based catalysis; rejects L-amino acids rather than detecting D-amino acids in the active site. By recycling D-aminoacyl-tRNA to D-amino acids and free tRNA molecules, this enzyme counteracts the toxicity associated with the formation of D-aminoacyl-tRNA entities in vivo and helps enforce protein L-homochirality. The chain is D-aminoacyl-tRNA deacylase from Shewanella sediminis (strain HAW-EB3).